The following is a 428-amino-acid chain: Stabilizer of axonemal microtubules 4 (428 aa).

The interval Ala-201–Leu-231 is disordered.

Microtubule inner protein component of sperm flagellar doublet microtubules. Interacts with PPP1CA.

The protein localises to the cell projection. It is found in the cilium. The protein resides in the cytoplasm. Its subcellular location is the cytoskeleton. It localises to the flagellum axoneme. The protein is Stabilizer of axonemal microtubules 4 of Bos taurus (Bovine).